Consider the following 395-residue polypeptide: S-adenosylmethionine synthase (395 aa).

Residue His-16 coordinates ATP. Residue Asp-18 participates in Mg(2+) binding. Residue Glu-44 coordinates K(+). Residues Glu-57 and Gln-100 each coordinate L-methionine. The flexible loop stretch occupies residues 100-110; the sequence is QSPDIAQGVDR. Residues 167–169, 233–234, Asp-242, 248–249, Ala-265, and Lys-269 contribute to the ATP site; these read DAK, RF, and RK. Residue Asp-242 coordinates L-methionine. L-methionine is bound at residue Lys-273.

The protein belongs to the AdoMet synthase family. In terms of assembly, homotetramer; dimer of dimers. Requires Mg(2+) as cofactor. K(+) serves as cofactor.

Its subcellular location is the cytoplasm. It carries out the reaction L-methionine + ATP + H2O = S-adenosyl-L-methionine + phosphate + diphosphate. The protein operates within amino-acid biosynthesis; S-adenosyl-L-methionine biosynthesis; S-adenosyl-L-methionine from L-methionine: step 1/1. In terms of biological role, catalyzes the formation of S-adenosylmethionine (AdoMet) from methionine and ATP. The overall synthetic reaction is composed of two sequential steps, AdoMet formation and the subsequent tripolyphosphate hydrolysis which occurs prior to release of AdoMet from the enzyme. This is S-adenosylmethionine synthase from Burkholderia cenocepacia (strain HI2424).